Here is a 116-residue protein sequence, read N- to C-terminus: Phosphoribosyl-AMP cyclohydrolase (116 aa).

Asp82 serves as a coordination point for Mg(2+). Cys83 provides a ligand contact to Zn(2+). Mg(2+) is bound by residues Asp84 and Asp86. 2 residues coordinate Zn(2+): Cys99 and Cys106.

This sequence belongs to the PRA-CH family. In terms of assembly, homodimer. It depends on Mg(2+) as a cofactor. Zn(2+) serves as cofactor.

It localises to the cytoplasm. The enzyme catalyses 1-(5-phospho-beta-D-ribosyl)-5'-AMP + H2O = 1-(5-phospho-beta-D-ribosyl)-5-[(5-phospho-beta-D-ribosylamino)methylideneamino]imidazole-4-carboxamide. The protein operates within amino-acid biosynthesis; L-histidine biosynthesis; L-histidine from 5-phospho-alpha-D-ribose 1-diphosphate: step 3/9. Its function is as follows. Catalyzes the hydrolysis of the adenine ring of phosphoribosyl-AMP. This Saccharopolyspora erythraea (strain ATCC 11635 / DSM 40517 / JCM 4748 / NBRC 13426 / NCIMB 8594 / NRRL 2338) protein is Phosphoribosyl-AMP cyclohydrolase.